An 817-amino-acid polypeptide reads, in one-letter code: Protein EFR3 homolog B (817 aa).

Serine 212, serine 214, and serine 216 each carry phosphoserine.

Belongs to the EFR3 family. As to quaternary structure, component of a phosphatidylinositol 4-kinase (PI4K) complex, composed of PI4KA, EFR3 (EFR3A or EFR3B), TTC7 (TTC7A or TTC7B) and HYCC (HYCC1 or HYCC2). In terms of processing, palmitoylated at its N-terminus, anchoring the protein to the plasma membrane.

Its subcellular location is the cell membrane. It localises to the cytoplasm. The protein localises to the cytosol. Component of a complex required to localize phosphatidylinositol 4-kinase (PI4K) to the plasma membrane. The complex acts as a regulator of phosphatidylinositol 4-phosphate (PtdIns(4)P) synthesis. In the complex, EFR3B probably acts as the membrane-anchoring component. Also involved in responsiveness to G-protein-coupled receptors; it is however unclear whether this role is direct or indirect. The sequence is that of Protein EFR3 homolog B from Homo sapiens (Human).